Reading from the N-terminus, the 159-residue chain is Ribosomal RNA large subunit methyltransferase H (159 aa).

S-adenosyl-L-methionine contacts are provided by residues L76, G108, and 127–132 (FSKMTF).

The protein belongs to the RNA methyltransferase RlmH family. In terms of assembly, homodimer.

The protein resides in the cytoplasm. It carries out the reaction pseudouridine(1915) in 23S rRNA + S-adenosyl-L-methionine = N(3)-methylpseudouridine(1915) in 23S rRNA + S-adenosyl-L-homocysteine + H(+). Its function is as follows. Specifically methylates the pseudouridine at position 1915 (m3Psi1915) in 23S rRNA. The chain is Ribosomal RNA large subunit methyltransferase H from Clostridium botulinum (strain Kyoto / Type A2).